The sequence spans 427 residues: tRNA(Ile)-lysidine synthase (427 aa).

27–32 serves as a coordination point for ATP; sequence SGGVDS.

Belongs to the tRNA(Ile)-lysidine synthase family.

Its subcellular location is the cytoplasm. It catalyses the reaction cytidine(34) in tRNA(Ile2) + L-lysine + ATP = lysidine(34) in tRNA(Ile2) + AMP + diphosphate + H(+). Ligates lysine onto the cytidine present at position 34 of the AUA codon-specific tRNA(Ile) that contains the anticodon CAU, in an ATP-dependent manner. Cytidine is converted to lysidine, thus changing the amino acid specificity of the tRNA from methionine to isoleucine. The polypeptide is tRNA(Ile)-lysidine synthase (Streptococcus equi subsp. zooepidemicus (strain H70)).